Consider the following 132-residue polypeptide: Small ribosomal subunit protein uS17c (132 aa).

Residues 1–11 (MLLLSSPFVSV) are compositionally biased toward low complexity. Disordered stretches follow at residues 1–23 (MLLL…SHGA) and 104–132 (PLPP…SSRE). The transit peptide at 1-31 (MLLLSSPFVSVSPPPPPLSSHGARPALRIEA) directs the protein to the chloroplast. Residues 122 to 132 (SDDDQEPSSRE) show a composition bias toward acidic residues.

It belongs to the universal ribosomal protein uS17 family. Part of the 30S ribosomal subunit.

Its subcellular location is the plastid. It is found in the chloroplast. Its function is as follows. One of the primary rRNA binding proteins, it binds specifically to the 5'-end of 16S ribosomal RNA. Functionally, in the hcf60 mutation the Activator tag is inserted 17 base pars upstream of the initiation codon. This mutation is seedling lethal, due to plastid ribosome insufficiency. However under non-light stressed conditions photosynthesis and oxygen evolution can occur. The protein is Small ribosomal subunit protein uS17c (RPS17) of Zea mays (Maize).